The following is a 275-amino-acid chain: Tryptase (275 aa).

Residues 1–20 (MLNLLVLALPLLVSLVHTAP) form the signal peptide. Residues 21-30 (APGQALERAG) constitute a propeptide, activation peptide. The 242-residue stretch at 31–272 (IVGGKEAPGH…YLDWIHQCIP (242 aa)) folds into the Peptidase S1 domain. The cysteines at positions 59 and 75 are disulfide-linked. Catalysis depends on charge relay system residues H74 and D121. N132 carries an N-linked (GlcNAc...) asparagine glycan. 3 disulfides stabilise this stretch: C155–C230, C188–C211, and C220–C248. The active-site Charge relay system is the S224. A glycan (N-linked (GlcNAc...) asparagine) is linked at N233.

Belongs to the peptidase S1 family. Tryptase subfamily. Homotetramer.

It localises to the secreted. It carries out the reaction Preferential cleavage: Arg-|-Xaa, Lys-|-Xaa, but with more restricted specificity than trypsin.. In terms of biological role, tryptase is the major neutral protease present in mast cells and is secreted upon the coupled activation-degranulation response of this cell type. The chain is Tryptase (MCT7) from Sus scrofa (Pig).